A 255-amino-acid polypeptide reads, in one-letter code: Ribonuclease PH (255 aa).

Phosphate contacts are provided by residues Arg-86 and 124-126 (GTR).

This sequence belongs to the RNase PH family. As to quaternary structure, homohexameric ring arranged as a trimer of dimers.

It catalyses the reaction tRNA(n+1) + phosphate = tRNA(n) + a ribonucleoside 5'-diphosphate. Its function is as follows. Phosphorolytic 3'-5' exoribonuclease that plays an important role in tRNA 3'-end maturation. Removes nucleotide residues following the 3'-CCA terminus of tRNAs; can also add nucleotides to the ends of RNA molecules by using nucleoside diphosphates as substrates, but this may not be physiologically important. Probably plays a role in initiation of 16S rRNA degradation (leading to ribosome degradation) during starvation. The protein is Ribonuclease PH of Aquifex aeolicus (strain VF5).